We begin with the raw amino-acid sequence, 325 residues long: S-adenosylmethionine carrier 1, chloroplastic/mitochondrial (325 aa).

Residues 1-38 (MAPLTLSVDVKSSSATSHDVSKRVMQSSQLKINKGFFA) constitute a chloroplast and mitochondrion transit peptide. Solcar repeat units follow at residues 52–124 (RTLF…TKQK), 133–215 (LSAV…LCLG), and 228–310 (ENAL…TKRT). 5 helical membrane-spanning segments follow: residues 55–75 (FEGF…LYPI), 97–117 (YSGL…FVGV), 132–152 (HLSA…ASLI), 230–250 (ALIG…LDVI), and 285–305 (GIGP…GVLE).

This sequence belongs to the mitochondrial carrier (TC 2.A.29) family. Expressed in seedlings, cotyledons, leaves and flowers. Lower levels of expression in stems and roots. Not detected in senescent leaves, petals and pollen grains.

The protein localises to the mitochondrion membrane. Its subcellular location is the plastid. It is found in the chloroplast membrane. With respect to regulation, inhibited strongly by tannic acid, bromocresol purple, mercuric chloride, mersalyl, p-hydroxymercuribenzoate, S-adenosylhomocysteine, S-adenosylcysteine and adenosylornithine, and to a lesser extent by N-ethylmaleimide, bathophenanthroline and pyridoxal-5'-P. Transporter involved in exchange reactions through membranes. Has a low uniporter activity. Specifically mediates the transport of S-adenosylmethionine (SAM) and its closest analogs. Probably involved in the uptake of SAM in exchange for S-adenosylhomocysteine (SAHC), which is produced from SAM in the mitochondrial matrix and plastidial stroma by methyltransferase activities. This is S-adenosylmethionine carrier 1, chloroplastic/mitochondrial (SAMC1) from Arabidopsis thaliana (Mouse-ear cress).